Reading from the N-terminus, the 354-residue chain is Chorismate synthase (354 aa).

Arg-48 provides a ligand contact to NADP(+). FMN contacts are provided by residues 125–127, Ala-280, 295–299, and Arg-321; these read RAS and KPIPS.

Belongs to the chorismate synthase family. Homotetramer. FMNH2 is required as a cofactor.

The catalysed reaction is 5-O-(1-carboxyvinyl)-3-phosphoshikimate = chorismate + phosphate. It participates in metabolic intermediate biosynthesis; chorismate biosynthesis; chorismate from D-erythrose 4-phosphate and phosphoenolpyruvate: step 7/7. In terms of biological role, catalyzes the anti-1,4-elimination of the C-3 phosphate and the C-6 proR hydrogen from 5-enolpyruvylshikimate-3-phosphate (EPSP) to yield chorismate, which is the branch point compound that serves as the starting substrate for the three terminal pathways of aromatic amino acid biosynthesis. This reaction introduces a second double bond into the aromatic ring system. The polypeptide is Chorismate synthase (Syntrophus aciditrophicus (strain SB)).